Here is a 140-residue protein sequence, read N- to C-terminus: Sex-regulated protein janus-B (140 aa).

Arginine 42 contacts substrate. Catalysis depends on histidine 69, which acts as the Proton acceptor. 110–112 is a binding site for substrate; it reads SRT.

Belongs to the janus family.

Functionally, janA and janB regulate somatic sex differentiation. In Drosophila orena (Fruit fly), this protein is Sex-regulated protein janus-B (janB).